Reading from the N-terminus, the 700-residue chain is Elongation factor G (700 aa).

Residues 8–290 form the tr-type G domain; the sequence is ERYRNIGISA…AVIDYLPSPV (283 aa). GTP-binding positions include 17-24, 88-92, and 142-145; these read AHIDAGKT, DTPGH, and NKMD.

This sequence belongs to the TRAFAC class translation factor GTPase superfamily. Classic translation factor GTPase family. EF-G/EF-2 subfamily.

It localises to the cytoplasm. Functionally, catalyzes the GTP-dependent ribosomal translocation step during translation elongation. During this step, the ribosome changes from the pre-translocational (PRE) to the post-translocational (POST) state as the newly formed A-site-bound peptidyl-tRNA and P-site-bound deacylated tRNA move to the P and E sites, respectively. Catalyzes the coordinated movement of the two tRNA molecules, the mRNA and conformational changes in the ribosome. The sequence is that of Elongation factor G from Paracidovorax citrulli (strain AAC00-1) (Acidovorax citrulli).